We begin with the raw amino-acid sequence, 360 residues long: MKSSIRQKLELLVDRLDEIDRMLSAPSTASDMDQFRKLSRERAEVEPVVVQFNAFRQAENDLAEAEAMLSDPDMREFAEEEMAAAKARLPELELELQKLLLPKDPNDERSVLLEIRAGTGGDESALFAGSLFRMYSRFAERQRWQVEVMSASESELGGYREIICRIAGNGAYSRLKFESGGHRVQRVPETETQGRIHTSACTVAVMPEVDEVEDVNLNPADLRIDTFRASGAGGQHINKTDSAVRITHLPTGIVAECQDGRSQHANKASALKVLAARIKDVQVRAQQAHISSTRKSLIGSGDRSERIRTYNFPQGRITDHRINLTLYKIAAIMDGDMDELLGALAAEHQADLLAELAEQN.

At Q235 the chain carries N5-methylglutamine.

Belongs to the prokaryotic/mitochondrial release factor family. In terms of processing, methylated by PrmC. Methylation increases the termination efficiency of RF1.

The protein localises to the cytoplasm. Its function is as follows. Peptide chain release factor 1 directs the termination of translation in response to the peptide chain termination codons UAG and UAA. In Dechloromonas aromatica (strain RCB), this protein is Peptide chain release factor 1.